A 261-amino-acid chain; its full sequence is Immediate-early protein IE-0 (261 aa).

The RING-type zinc-finger motif lies at 212 to 257 (CNVCKEISTDERFLKPKECCEYAICNACCVNMWKTATTHAKCPACR).

As to quaternary structure, interacts with proteins C42 and FP25. Interacts with host beta-tubulin. Interacts with Ac66 and vUb.

Its subcellular location is the host nucleus. The protein resides in the host cytoplasm. It localises to the virion. Its function is as follows. Putative viral E3 ligase that plays an essential regulatory role in both viral DNA replication and transcriptional transactivation. The role in transcription has been shown to include activation of gene expression from early viral promoters. Also promotes the efficient egress of nucleocapsids from the host nucleus. May act as an E3 ligase that promotes ubiquitination of nucleocapsids proteins by vUbi and subsequent viral egress for the host nucleus. This chain is Immediate-early protein IE-0 (IE0), found in Lepidoptera (butterflies and moths).